Here is a 324-residue protein sequence, read N- to C-terminus: Zinc transporter ZIP1 (324 aa).

The Extracellular portion of the chain corresponds to 1-30 (MGPWGEPELLVWRPEAVASEPSVPVGLEVK). Residues 31 to 51 (LGALVLLLLLTLICSLVPVCV) form a helical membrane-spanning segment. At 52-68 (LRRSGANHEASASGQKA) the chain is on the cytoplasmic side. The chain crosses the membrane as a helical span at residues 69-89 (LSLVSCFAGGVFLATCLLDLL). The Extracellular portion of the chain corresponds to 90–104 (PDYLAAIDEALEALH). A helical transmembrane segment spans residues 105 to 125 (VTLQFPLQEFILAMGFFLVLV). Residues 126–179 (MEQITLAYKEQTSPPHPEETRALLGTVNGGPQHWHDGPGIPQAGGTPAAPSALR) lie on the Cytoplasmic side of the membrane. Residues 180–200 (ACVLVFSLALHSVFEGLAVGL) form a helical membrane-spanning segment. At 201-206 (QRDRAR) the chain is on the extracellular side. A helical membrane pass occupies residues 207-227 (AMELCLALLLHKGILAVSLSL). Residues 228-237 (RLLQSHLRVQ) lie on the Cytoplasmic side of the membrane. A helical transmembrane segment spans residues 238–258 (VVAGCGILFSCMTPLGIGLGA). Over 259–272 (ALAESAGPLHQLAQ) the chain is Extracellular. The helical transmembrane segment at 273–293 (SVLEGMAAGTFLYITFLEILP) threads the bilayer. The Cytoplasmic portion of the chain corresponds to 294–303 (QELATSEQRI). A helical membrane pass occupies residues 304 to 324 (LKVILLLAGFALLTGLLFVQI).

This sequence belongs to the ZIP transporter (TC 2.A.5) family. In terms of tissue distribution, ubiquitous, except in the pancreas. Highest levels seen in kidney, salivary gland and placenta.

It is found in the cell membrane. It localises to the endoplasmic reticulum membrane. It catalyses the reaction Zn(2+)(in) = Zn(2+)(out). In terms of biological role, transporter for the divalent cation Zn(2+). Mediates the influx of Zn(2+) into cells from extracellular space. This Mus musculus (Mouse) protein is Zinc transporter ZIP1 (Slc39a1).